A 218-amino-acid polypeptide reads, in one-letter code: MSIQQNKRPVVIGVTGGSGSGKTTVSNKIYDQLHGQAIQIINQDTYYNDQSDMTMDERKAVNYDHPLAFDTDFLIKQLTDLRSNKAIEMPVYDYTQYTRSDKTVHVEPTDVIILEGILILDDERLRDLMDIKVYVDTDDDIRIIRRIQRDMVERGRSLDSIITQYLATVKPMYHQFVEPTKRYADIIVPEGGENQVAIDLLSTKIRDILVKRGHTELR.

An ATP-binding site is contributed by 16–23 (GGSGSGKT).

It belongs to the uridine kinase family.

The protein resides in the cytoplasm. It carries out the reaction uridine + ATP = UMP + ADP + H(+). The catalysed reaction is cytidine + ATP = CMP + ADP + H(+). Its pathway is pyrimidine metabolism; CTP biosynthesis via salvage pathway; CTP from cytidine: step 1/3. It participates in pyrimidine metabolism; UMP biosynthesis via salvage pathway; UMP from uridine: step 1/1. In Limosilactobacillus reuteri (strain DSM 20016) (Lactobacillus reuteri), this protein is Uridine kinase.